Consider the following 786-residue polypeptide: DENN domain-containing protein 1C (786 aa).

Residues 13 to 158 form the uDENN domain; sequence FDWFFEAGCP…MDSSITVRSE (146 aa). The cDENN domain maps to 182–318; that stretch reads SLPSIPENRN…VVSLLRLRLR (137 aa). The dDENN domain maps to 320 to 398; that stretch reads VALSPGEGVS…ESRLEKLNAG (79 aa). The FXDXF motif motif lies at 401–405; that stretch reads FSDQF. The interval 481–553 is disordered; it reads KDGDSGLQRG…LSPGDTQNPW (73 aa). A compositionally biased stretch (basic and acidic residues) spans 527–541; the sequence is LKTEEGPSEPLRERS. Polar residues predominate over residues 542–552; it reads PTLSPGDTQNP. Ser-565 is modified (phosphoserine). Positions 570 to 579 match the Clathrin box motif; sequence DLLSEILDSL. 2 disordered regions span residues 653–741 and 762–786; these read YSKN…QPPQ and SHVS…CFEN. The span at 657 to 675 shows a compositional bias: low complexity; the sequence is SCSQPFQQSPPSQGDPGPS. The segment covering 706-740 has biased composition (polar residues); sequence LLVSTEPNSDAVQRLQSISSPSCSHSAENPRNQPP. The segment covering 770–786 has biased composition (basic and acidic residues); it reads PQDKQPRVADLKKCFEN.

In terms of assembly, exhibits low nucleotide-independent RAB35-binding activity. Interacts with clathrin heavy chain/CLTC and with AP2A2, but not with AP2B1.

The protein localises to the cytoplasm. Its subcellular location is the cytosol. It localises to the cytoplasmic vesicle. It is found in the clathrin-coated vesicle. Its function is as follows. Guanine nucleotide exchange factor (GEF) which may activate RAB8A, RAB13 and RAB35. Promotes the exchange of GDP to GTP, converting inactive GDP-bound Rab proteins into their active GTP-bound form. This Mus musculus (Mouse) protein is DENN domain-containing protein 1C (Dennd1c).